We begin with the raw amino-acid sequence, 86 residues long: Small ribosomal subunit protein uS17 (86 aa).

The protein belongs to the universal ribosomal protein uS17 family. As to quaternary structure, part of the 30S ribosomal subunit.

Functionally, one of the primary rRNA binding proteins, it binds specifically to the 5'-end of 16S ribosomal RNA. The chain is Small ribosomal subunit protein uS17 from Streptococcus equi subsp. equi (strain 4047).